A 529-amino-acid chain; its full sequence is Bifunctional purine biosynthesis protein PurH (529 aa).

Residues 1–148 (MQQRRPIRRA…KNHKDVAIVV (148 aa)) form the MGS-like domain.

The protein belongs to the PurH family.

It carries out the reaction (6R)-10-formyltetrahydrofolate + 5-amino-1-(5-phospho-beta-D-ribosyl)imidazole-4-carboxamide = 5-formamido-1-(5-phospho-D-ribosyl)imidazole-4-carboxamide + (6S)-5,6,7,8-tetrahydrofolate. The catalysed reaction is IMP + H2O = 5-formamido-1-(5-phospho-D-ribosyl)imidazole-4-carboxamide. Its pathway is purine metabolism; IMP biosynthesis via de novo pathway; 5-formamido-1-(5-phospho-D-ribosyl)imidazole-4-carboxamide from 5-amino-1-(5-phospho-D-ribosyl)imidazole-4-carboxamide (10-formyl THF route): step 1/1. It functions in the pathway purine metabolism; IMP biosynthesis via de novo pathway; IMP from 5-formamido-1-(5-phospho-D-ribosyl)imidazole-4-carboxamide: step 1/1. The sequence is that of Bifunctional purine biosynthesis protein PurH from Pectobacterium carotovorum subsp. carotovorum (strain PC1).